Reading from the N-terminus, the 868-residue chain is Translation initiation factor IF-2 (868 aa).

Disordered regions lie at residues 158-178 (VKEEEKINSEENTAESQDELT) and 200-269 (KKEE…KYRE). Positions 200-209 (KKEEVKPEKV) are enriched in basic and acidic residues. Residues 249–260 (RGGRSKFKKKKG) show a composition bias toward basic residues. Residues 368–537 (GRAPVVTIMG…LLQSEVLELK (170 aa)) enclose the tr-type G domain. Residues 377–384 (GHVDHGKT) form a G1 region. 377–384 (GHVDHGKT) serves as a coordination point for GTP. The G2 stretch occupies residues 402–406 (GITQH). Residues 423–426 (DTPG) form a G3 region. GTP is bound by residues 423-427 (DTPGH) and 477-480 (NKMD). The segment at 477-480 (NKMD) is G4. Residues 513-515 (SAK) are G5.

The protein belongs to the TRAFAC class translation factor GTPase superfamily. Classic translation factor GTPase family. IF-2 subfamily.

It localises to the cytoplasm. In terms of biological role, one of the essential components for the initiation of protein synthesis. Protects formylmethionyl-tRNA from spontaneous hydrolysis and promotes its binding to the 30S ribosomal subunits. Also involved in the hydrolysis of GTP during the formation of the 70S ribosomal complex. The chain is Translation initiation factor IF-2 from Legionella pneumophila (strain Lens).